A 143-amino-acid chain; its full sequence is Small ribosomal subunit protein bS6 (143 aa).

The tract at residues 97–143 (DTEQSLIMKSKDEKGDKHERSERRRRDDEEGDVPAATDTDGDNAEAA) is disordered. Positions 105-124 (KSKDEKGDKHERSERRRRDD) are enriched in basic and acidic residues.

This sequence belongs to the bacterial ribosomal protein bS6 family.

Its function is as follows. Binds together with bS18 to 16S ribosomal RNA. The chain is Small ribosomal subunit protein bS6 from Xanthomonas oryzae pv. oryzae (strain MAFF 311018).